Here is a 535-residue protein sequence, read N- to C-terminus: CTP synthase (535 aa).

The interval 1–270 (MSKNTKYVFV…DRLVCEKLGL (270 aa)) is amidoligase domain. Ser16 serves as a coordination point for CTP. Ser16 provides a ligand contact to UTP. 17–22 (SLGKGI) contributes to the ATP binding site. L-glutamine is bound at residue Tyr57. Asp74 contacts ATP. Positions 74 and 144 each coordinate Mg(2+). CTP is bound by residues 151-153 (DIE), 191-196 (KTKPTQ), and Lys227. Residues 191-196 (KTKPTQ) and Lys227 each bind UTP. The Glutamine amidotransferase type-1 domain occupies 295 to 535 (KIALVGKYVE…GFVGAALNNK (241 aa)). Gly357 provides a ligand contact to L-glutamine. The active-site Nucleophile; for glutamine hydrolysis is the Cys384. Residues 385–388 (LGMQ), Glu408, and Arg465 contribute to the L-glutamine site. Residues His510 and Glu512 contribute to the active site.

Belongs to the CTP synthase family. As to quaternary structure, homotetramer.

The catalysed reaction is UTP + L-glutamine + ATP + H2O = CTP + L-glutamate + ADP + phosphate + 2 H(+). It carries out the reaction L-glutamine + H2O = L-glutamate + NH4(+). It catalyses the reaction UTP + NH4(+) + ATP = CTP + ADP + phosphate + 2 H(+). Its pathway is pyrimidine metabolism; CTP biosynthesis via de novo pathway; CTP from UDP: step 2/2. With respect to regulation, allosterically activated by GTP, when glutamine is the substrate; GTP has no effect on the reaction when ammonia is the substrate. The allosteric effector GTP functions by stabilizing the protein conformation that binds the tetrahedral intermediate(s) formed during glutamine hydrolysis. Inhibited by the product CTP, via allosteric rather than competitive inhibition. Its function is as follows. Catalyzes the ATP-dependent amination of UTP to CTP with either L-glutamine or ammonia as the source of nitrogen. Regulates intracellular CTP levels through interactions with the four ribonucleotide triphosphates. The sequence is that of CTP synthase from Clostridium perfringens (strain ATCC 13124 / DSM 756 / JCM 1290 / NCIMB 6125 / NCTC 8237 / Type A).